Consider the following 974-residue polypeptide: Zinc finger protein 280D (974 aa).

Residues lysine 44, lysine 46, lysine 86, lysine 99, lysine 138, lysine 201, lysine 222, lysine 245, lysine 287, and lysine 304 each participate in a glycyl lysine isopeptide (Lys-Gly) (interchain with G-Cter in SUMO2) cross-link. Residues 188–216 form a disordered region; that stretch reads KRPSGSDISSVNPKKPKPSENTSGIDASS. C2H2-type zinc fingers lie at residues 333–355 and 370–393; these read FKCFSCLKVLKNNIRFMNHMKHH and TTCQHCYRQFPTPFQLQCHIESTH. The C2H2-type 3; degenerate zinc-finger motif lies at 400–424; sequence TICKICELSFETEQILLQHMKDNHK. 2 consecutive C2H2-type zinc fingers follow at residues 430–453 and 459–481; these read YICQVCNYRSSLFSEVESHFRTSH and LLCPFCLKVIKIATPYMHHYMKH. Disordered regions lie at residues 507-624, 751-797, and 815-974; these read TQHH…KVNT, IKTE…EGTG, and VTVS…EERS. Over residues 539 to 557 the composition is skewed to low complexity; sequence SGSSVTPSISPSTSTLQLS. At serine 557 the chain carries Phosphoserine. Polar residues predominate over residues 571 to 587; that stretch reads KLTTSTPNTTISDPSKA. Positions 591–611 are enriched in low complexity; the sequence is KSNGSKSKNKSKVSNMQKKQS. Residues 612–624 show a composition bias toward polar residues; sequence TLSSSNKKSKVNT. Lysine 752 participates in a covalent cross-link: Glycyl lysine isopeptide (Lys-Gly) (interchain with G-Cter in SUMO2). Positions 763-775 are enriched in basic and acidic residues; it reads VSKETARHSRAEG. Residues 817–829 are compositionally biased toward polar residues; the sequence is VSDTENVSSSKNI. Residues 830-860 are compositionally biased toward basic and acidic residues; the sequence is LSHDPDVGTDTMEKEEKTHHACQEMELKVDQ. Residues 861-884 show a composition bias toward polar residues; the sequence is SSESTNPTEAELSSETRQGLQLTS. Serine 904 and serine 907 each carry phosphoserine. The segment covering 938–950 has biased composition (polar residues); that stretch reads SANTSDTVSDQTG.

Its subcellular location is the nucleus. Its function is as follows. May function as a transcription factor. This Mus musculus (Mouse) protein is Zinc finger protein 280D (Znf280d).